Consider the following 506-residue polypeptide: uncharacterized protein (506 aa).

This sequence to group II intron maturases.

It is found in the plastid. The protein resides in the chloroplast. This is an uncharacterized protein from Euglena gracilis.